Reading from the N-terminus, the 740-residue chain is F-BAR and double SH3 domains protein 2 (740 aa).

The F-BAR domain occupies 8–282 (VKVTQELRNI…NSSKVVRDYN (275 aa)). Positions 303–323 (PCDSDTSRQLESETGTTEEHS) are disordered. Basic and acidic residues predominate over residues 307–323 (DTSRQLESETGTTEEHS). Positions 356–397 (GVALSEQSRAELEQKIDEARESIRKAEIIKLKAEARLDLLKQ) form a coiled coil. SH3 domains are found at residues 469–530 (NYPL…FPTS) and 567–629 (ASVC…ELSA). Residues 567 to 629 (ASVCFVKALY…PSVLVEELSA (63 aa)) form a required and sufficient for location at clathrin-coated pits region. Residues 629 to 645 (ASENGDTPWTREIQISP) are compositionally biased toward polar residues. A disordered region spans residues 629 to 740 (ASENGDTPWT…KMEDVEITLV (112 aa)). The span at 646–657 (SPKPHTSLPPLP) shows a compositional bias: pro residues. Phosphoserine is present on residues S675 and S681. Residues 675-706 (SQFFPRSPSANENSLHAESPGFSQASRQTPDT) are compositionally biased toward polar residues.

As to quaternary structure, homodimer. Interacts (via SH3 domain 2) with ITSN1 (via SH3 domain 4). Recruited to clathrin-coated pits during a mid-to-late stage of assembly via interaction with ITSN1. Interacts (via SH3 domain 1) with WASL. Interacts with WAS. Interacts with CASK and MAGI1. CASK inhibits interaction with MAGI1. Phosphorylated. Phosphorylation on a Ser residue is important for recruitment to the cell membrane and for its role in promoting endocytosis. Detected in inner ear vestibula and in stereocilia in cochlear hair cell bundles (at protein level). Ubiquitous. Detected in testis, liver, brain cortex, cerebellum, kidney, organ of Corti, utricle, spiral ganglion, tongue and eye.

The protein resides in the cytoplasm. The protein localises to the cell junction. It is found in the membrane. It localises to the clathrin-coated pit. Its subcellular location is the cell membrane. The protein resides in the cell projection. The protein localises to the stereocilium. Its function is as follows. Adapter protein that plays a role in endocytosis via clathrin-coated pits. Contributes to the internalization of cell surface receptors, such as integrin ITGB1 and transferrin receptor. Promotes endocytosis of EGFR in cancer cells, and thereby contributes to the down-regulation of EGFR signaling. Recruited to clathrin-coated pits during a mid-to-late stage of assembly, where it is required for normal progress from U-shaped intermediate stage pits to terminal, omega-shaped pits. Binds to membranes enriched in phosphatidylinositol 3,4-bisphosphate or phosphatidylinositol 3,4,5-trisphosphate. When bound to membranes, promotes actin polymerization via its interaction with WAS and/or WASL which leads to the activation of the Arp2/3 complex. Does not promote actin polymerisation in the absence of membranes. The chain is F-BAR and double SH3 domains protein 2 (Fchsd2) from Mus musculus (Mouse).